A 1011-amino-acid polypeptide reads, in one-letter code: Collagen alpha-2(I) chain (1011 aa).

A disordered region spans residues 1–1011 (SGGFDFSFLP…FGYEGDFYRA (1011 aa)). 4 positions are modified to 4-hydroxyproline: Pro-10, Pro-13, Pro-35, and Pro-41. Residues 28–67 (LMGPRGPPGASGAPGPQGFQGPAGEPGEPGQTGPAGARGP) are compositionally biased toward low complexity. 5-hydroxylysine; alternate is present on Lys-106. A glycan (O-linked (Gal...) hydroxylysine; alternate) is linked at Lys-106. The segment covering 167–182 (SVGPVGPAGPIGSAGP) has biased composition (low complexity). Residues 282–291 (GESGGKGEPG) are compositionally biased toward gly residues. Residues 292–302 (SAGPQGPPGSS) are compositionally biased toward low complexity. The segment covering 323–332 (GLRGGPGSRG) has biased composition (gly residues). Residues 345–361 (PAGARGASGPAGVRGPS) are compositionally biased toward low complexity. 2 positions are modified to 4-hydroxyproline: Pro-367 and Pro-370. Residues 396–415 (LPGIDGRPGPIGPAGARGEA) are compositionally biased toward low complexity. A compositionally biased stretch (gly residues) spans 464 to 473 (GVQGGKGEQG). Composition is skewed to low complexity over residues 520-537 (PGES…SRGP) and 549-559 (EPGVVGAPGTA). Over residues 560–578 (GPAGSGGPGERGAAGIPGG) the composition is skewed to gly residues. Low complexity-rich tracts occupy residues 588 to 635 (RGEV…PRGS) and 642 to 662 (VGPA…QPGA). Residues 663 to 672 (KGERGTKGPK) are compositionally biased toward basic and acidic residues. A compositionally biased stretch (low complexity) spans 680-690 (PTGPVGSAGPA). A compositionally biased stretch (gly residues) spans 700 to 709 (GSRGDGGPPG). A compositionally biased stretch (low complexity) spans 711–720 (TGFPGAAGRT). The segment covering 757 to 766 (GETGAGGPPG) has biased composition (gly residues). Composition is skewed to low complexity over residues 774 to 801 (SGEP…LGLP) and 809 to 819 (LPGVAGAVGEP). The span at 820–834 (GPLGIGPPGARGDGL) shows a compositional bias: gly residues. Low complexity-rich tracts occupy residues 843 to 856 (YAGN…AGAP) and 872 to 887 (EPGP…ALGP). Residues 897–908 (RGDKGEPGEKGP) show a composition bias toward basic and acidic residues. Residues 981 to 993 (SGPPGPPGPPGPP) are compositionally biased toward pro residues.

It belongs to the fibrillar collagen family. In terms of assembly, trimers of one alpha 2(I) and two alpha 1(I) chains. Interacts (via C-terminus) with TMEM131 (via PapD-L domain); the interaction is direct and is involved in assembly and TRAPPIII ER-to-Golgi transport complex-dependent secretion of collagen. Prolines at the third position of the tripeptide repeating unit (G-X-Y) are hydroxylated in some or all of the chains. In terms of tissue distribution, expressed in bones.

It localises to the secreted. The protein resides in the extracellular space. It is found in the extracellular matrix. Type I collagen is a member of group I collagen (fibrillar forming collagen). This chain is Collagen alpha-2(I) chain, found in Neocnus comes (Miller's Hispaniolan ground sloth).